Consider the following 479-residue polypeptide: U2 small nuclear ribonucleoprotein auxiliary factor 35 kDa subunit-related protein 1 (479 aa).

The interval 1-63 is disordered; the sequence is MAALEKMTFP…EDTFIEEQQL (63 aa). The segment covering 20–37 has biased composition (basic residues); it reads SHKKYRAALKKEKRKKRR. Acidic residues predominate over residues 50–63; sequence QEEEEDTFIEEQQL. Residue Lys-67 forms a Glycyl lysine isopeptide (Lys-Gly) (interchain with G-Cter in SUMO2) linkage. The C3H1-type 1 zinc finger occupies 171-199; that stretch reads EKDRANCPFYSKTGACRFGDRCSRKHNFP. In terms of domain architecture, RRM spans 203–309; it reads PTLLIKSMFT…RQLQCEFCPV (107 aa). The C3H1-type 2 zinc finger occupies 311-338; that stretch reads RWKMAICGLFEIQQCPRGKHCNFLHVFR. Position 354 is a phosphoserine (Ser-354). The disordered stretch occupies residues 356-479; it reads DQTGSSFGKN…DRTVQSPQSK (124 aa). Composition is skewed to basic and acidic residues over residues 365 to 379 and 388 to 403; these read NSER…DHYY and PSPD…SERK. Position 389 is a phosphoserine (Ser-389). Composition is skewed to basic residues over residues 404 to 417 and 442 to 451; these read KSSH…KRTS and SQSRRSHRSR.

It localises to the nucleus. This is U2 small nuclear ribonucleoprotein auxiliary factor 35 kDa subunit-related protein 1 from Homo sapiens (Human).